The following is an 898-amino-acid chain: Endoplasmic reticulum metallopeptidase 1 (898 aa).

N-acetylmethionine is present on M1. Positions 1–55 (MEWSSESAAVRRHRGTAERREGEAAASHRQREASAQEDAKGVGRMWGKTENGGGS) are disordered. Residues 1 to 66 (MEWSSESAAV…VAKTALSEAR (66 aa)) are Cytoplasmic-facing. Over residues 29–41 (RQREASAQEDAKG) the composition is skewed to basic and acidic residues. Residues 67-87 (TALALALYLLALRALVQLSLQ) traverse the membrane as a helical segment. The Lumenal segment spans residues 88–393 (RLVLSRTSGL…SSSEYRHGSM (306 aa)). The N-linked (GlcNAc...) asparagine glycan is linked to N176. C198 and C216 are disulfide-bonded. Zn(2+) is bound by residues H199 and D211. Catalysis depends on E245, which acts as the Proton acceptor. E246, E272, and H348 together coordinate Zn(2+). A helical membrane pass occupies residues 394-414 (VFFDVLGLLVIAYPSRVGSII). At 415–451 (NYMVVMAVVLYLGKKLLRPKHRNANYMRDFLCGLGIT) the chain is on the cytoplasmic side. A helical membrane pass occupies residues 452-472 (FISWFTSLVTVLIIAVFISLI). Residues 473-480 (GQSLSWYN) are Lumenal-facing. Residues 481 to 501 (YFYIAVCLYGTATVAKIIFIH) traverse the membrane as a helical segment. Residues 502–515 (TLAKRFYYMNASDL) lie on the Cytoplasmic side of the membrane. The helical transmembrane segment at 516-538 (YLGELFFDTSLFVHCAFLVALTY) threads the bilayer. The Lumenal segment spans residues 539–542 (QGFC). Residues 543–562 (SAFMSAVWVVFPLLTKLCVY) form a helical membrane-spanning segment. Residues 563–573 (KDFKKHGAQGR) are Cytoplasmic-facing. Residues 574–594 (FVALYLLGMFIPYLYGLYLIW) form a helical membrane-spanning segment. Residues 595 to 615 (AVFEMFTPILGRSGSEIPPDV) lie on the Lumenal side of the membrane. A helical transmembrane segment spans residues 616-636 (VLASILAVCVMILSSYFITFI). Over 637 to 645 (YLVNSTKKT) the chain is Cytoplasmic. Residues 646 to 666 (ILTLILVCAVTFLLVCSGAFF) form a helical membrane-spanning segment. The Lumenal portion of the chain corresponds to 667–898 (PYSSNPESPK…WVSTYSLFVF (232 aa)). Residue N724 is glycosylated (N-linked (GlcNAc...) asparagine).

This sequence belongs to the peptidase M28 family. It depends on Zn(2+) as a cofactor.

The protein resides in the endoplasmic reticulum membrane. Functionally, within the ovary, required for the organization of somatic cells and oocytes into discrete follicular structures. This chain is Endoplasmic reticulum metallopeptidase 1, found in Mus musculus (Mouse).